We begin with the raw amino-acid sequence, 284 residues long: Ribosomal RNA small subunit methyltransferase A (284 aa).

Asparagine 22, leucine 24, glycine 49, glutamate 70, aspartate 97, and asparagine 117 together coordinate S-adenosyl-L-methionine.

It belongs to the class I-like SAM-binding methyltransferase superfamily. rRNA adenine N(6)-methyltransferase family. RsmA subfamily.

It localises to the cytoplasm. The catalysed reaction is adenosine(1518)/adenosine(1519) in 16S rRNA + 4 S-adenosyl-L-methionine = N(6)-dimethyladenosine(1518)/N(6)-dimethyladenosine(1519) in 16S rRNA + 4 S-adenosyl-L-homocysteine + 4 H(+). Specifically dimethylates two adjacent adenosines (A1518 and A1519) in the loop of a conserved hairpin near the 3'-end of 16S rRNA in the 30S particle. May play a critical role in biogenesis of 30S subunits. The chain is Ribosomal RNA small subunit methyltransferase A from Desulforapulum autotrophicum (strain ATCC 43914 / DSM 3382 / VKM B-1955 / HRM2) (Desulfobacterium autotrophicum).